The following is a 243-amino-acid chain: Ribonuclease 3 (243 aa).

One can recognise an RNase III domain in the interval 10–146 (INRFRKRFDT…FIGALYLDQG (137 aa)). Position 59 (Glu-59) interacts with Mg(2+). The active site involves Asp-63. Asp-132 and Glu-135 together coordinate Mg(2+). Glu-135 is an active-site residue. The region spanning 172–241 (DFKTQFQEYV…AESAYKQLKQ (70 aa)) is the DRBM domain. The span at 219–231 (GKGKTKKESEQRA) shows a compositional bias: basic and acidic residues. Positions 219–243 (GKGKTKKESEQRAAESAYKQLKQIK) are disordered.

The protein belongs to the ribonuclease III family. As to quaternary structure, homodimer. The cofactor is Mg(2+).

The protein resides in the cytoplasm. The catalysed reaction is Endonucleolytic cleavage to 5'-phosphomonoester.. Digests double-stranded RNA. Involved in the processing of primary rRNA transcript to yield the immediate precursors to the large and small rRNAs (23S and 16S). Processes some mRNAs, and tRNAs when they are encoded in the rRNA operon. Processes pre-crRNA and tracrRNA of type II CRISPR loci if present in the organism. This chain is Ribonuclease 3, found in Staphylococcus aureus (strain bovine RF122 / ET3-1).